Here is a 321-residue protein sequence, read N- to C-terminus: Tetraacyldisaccharide 4'-kinase (321 aa).

54-61 (SVGGTGKT) provides a ligand contact to ATP.

It belongs to the LpxK family.

It catalyses the reaction a lipid A disaccharide + ATP = a lipid IVA + ADP + H(+). Its pathway is glycolipid biosynthesis; lipid IV(A) biosynthesis; lipid IV(A) from (3R)-3-hydroxytetradecanoyl-[acyl-carrier-protein] and UDP-N-acetyl-alpha-D-glucosamine: step 6/6. Transfers the gamma-phosphate of ATP to the 4'-position of a tetraacyldisaccharide 1-phosphate intermediate (termed DS-1-P) to form tetraacyldisaccharide 1,4'-bis-phosphate (lipid IVA). This chain is Tetraacyldisaccharide 4'-kinase, found in Rickettsia peacockii (strain Rustic).